Here is a 311-residue protein sequence, read N- to C-terminus: DNA replication terminus site-binding protein (311 aa).

This sequence belongs to the Tus family.

Its subcellular location is the cytoplasm. Functionally, trans-acting protein required for termination of DNA replication. Binds to DNA replication terminator sequences (terA to terF) to prevent the passage of replication forks. The termination efficiency will be affected by the affinity of this protein for the terminator sequence. The polypeptide is DNA replication terminus site-binding protein (Yersinia pestis).